Here is a 609-residue protein sequence, read N- to C-terminus: Alpha-glucosides permease MPH2 (609 aa).

Residues 1-106 (MKNLSFLINR…AAAWSLLVST (106 aa)) are Cytoplasmic-facing. The helical transmembrane segment at 107 to 127 (TLIMEGYDTAILGAFYALPIF) threads the bilayer. Residues 128–142 (QRKFGSQNDKTGEWE) lie on the Extracellular side of the membrane. Residues 143-163 (ISASWQIGLTLCYMAGEIVGL) traverse the membrane as a helical segment. At 164–178 (QLTGPSVDLVGNRYT) the chain is on the cytoplasmic side. Residues 179 to 199 (LIIALFFLAAFTFILYFCNSL) traverse the membrane as a helical segment. Residue G200 is a topological domain, extracellular. Residues 201–221 (MIAVGQALCGMPWGCFQCLTV) form a helical membrane-spanning segment. At 222–234 (SYASEICPLALRY) the chain is on the cytoplasmic side. Residues 235-255 (YLTTYSNLCWLFGQLFAAGIM) traverse the membrane as a helical segment. The Extracellular portion of the chain corresponds to 256–270 (KNSQKKYADSELGYK). A helical transmembrane segment spans residues 271 to 291 (LPFALQWILPVPLALGIFFAP). The Cytoplasmic portion of the chain corresponds to 292 to 363 (ESPWWLVKKG…EDKINRRRTR (72 aa)). The chain crosses the membrane as a helical span at residues 364–384 (ITCLCWAGQATCGSILIGYST). Residues 385 to 397 (YFYEKAGVSTEMS) lie on the Extracellular side of the membrane. A helical transmembrane segment spans residues 398 to 418 (FTFSIIQYCLGICATFLSWWA). Residues 419-426 (SKYFGRYD) lie on the Cytoplasmic side of the membrane. The helical transmembrane segment at 427–447 (LYAFGLAFQTIVFFIIGGLGC) threads the bilayer. Residues 448 to 459 (SSTHGSKMGSGS) lie on the Extracellular side of the membrane. The chain crosses the membrane as a helical span at residues 460 to 480 (LLMAVAFFYNLGIAPVVFCLV). Residues 481–492 (SEMPSSRLRTKT) are Cytoplasmic-facing. The helical transmembrane segment at 493–513 (IILARNTYNVVSIICSVLILY) threads the bilayer. Topologically, residues 514–525 (QLNSKKWNWGAK) are extracellular. The chain crosses the membrane as a helical span at residues 526-546 (SGFFWGVLCFCTLIWAVVDLP). Residues 547–609 (ETAGKTFVEI…QRNSNVSHHL (63 aa)) lie on the Cytoplasmic side of the membrane.

This sequence belongs to the major facilitator superfamily. Sugar transporter (TC 2.A.1.1) family.

The protein localises to the cell membrane. Its function is as follows. High-affinity uptake of maltose and maltotriose. Also transports alpha-methylglucoside, glucose and turanose but not melezitose or trehalose. The protein is Alpha-glucosides permease MPH2 (MPH2) of Saccharomyces cerevisiae (strain ATCC 204508 / S288c) (Baker's yeast).